The sequence spans 33 residues: Ice-structuring protein SS-3 (33 aa).

This sequence belongs to the type-I AFP family.

Antifreeze proteins lower the blood freezing point. This is Ice-structuring protein SS-3 from Myoxocephalus scorpius (Shorthorn sculpin).